The sequence spans 349 residues: Meiotic recombination protein DMC1 homolog (349 aa).

Residue 138–145 participates in ATP binding; the sequence is GEFRSGKT. Arginine 240 contacts dsDNA. SsDNA is bound by residues arginine 240, phenylalanine 243, arginine 246, arginine 252, and arginine 320. DsDNA contacts are provided by arginine 246 and arginine 252.

This sequence belongs to the RecA family. DMC1 subfamily. Double stacked ring-shaped homooctamer.

The protein localises to the nucleus. Functionally, may participate in meiotic recombination. The chain is Meiotic recombination protein DMC1 homolog (LIM15) from Lilium longiflorum (Trumpet lily).